A 321-amino-acid chain; its full sequence is Lipoyl synthase (321 aa).

[4Fe-4S] cluster contacts are provided by C68, C73, C79, C94, C98, C101, and S308. Residues 80-297 (FNHGTATFMI…KEIALELGFT (218 aa)) enclose the Radical SAM core domain.

Belongs to the radical SAM superfamily. Lipoyl synthase family. [4Fe-4S] cluster serves as cofactor.

Its subcellular location is the cytoplasm. It carries out the reaction [[Fe-S] cluster scaffold protein carrying a second [4Fe-4S](2+) cluster] + N(6)-octanoyl-L-lysyl-[protein] + 2 oxidized [2Fe-2S]-[ferredoxin] + 2 S-adenosyl-L-methionine + 4 H(+) = [[Fe-S] cluster scaffold protein] + N(6)-[(R)-dihydrolipoyl]-L-lysyl-[protein] + 4 Fe(3+) + 2 hydrogen sulfide + 2 5'-deoxyadenosine + 2 L-methionine + 2 reduced [2Fe-2S]-[ferredoxin]. The protein operates within protein modification; protein lipoylation via endogenous pathway; protein N(6)-(lipoyl)lysine from octanoyl-[acyl-carrier-protein]: step 2/2. In terms of biological role, catalyzes the radical-mediated insertion of two sulfur atoms into the C-6 and C-8 positions of the octanoyl moiety bound to the lipoyl domains of lipoate-dependent enzymes, thereby converting the octanoylated domains into lipoylated derivatives. This chain is Lipoyl synthase, found in Vibrio vulnificus (strain CMCP6).